Consider the following 513-residue polypeptide: MDAFKGAMSKTLEVFTFCNIILALASLVVAQCVYQIIYYRFFHPLRHYPGPFWASVTRLWGAYHFIKGDKLDLEWQAIKQYGPIIRTSPTMLLVADSTLMPAIYHRRDTKARFYLSEMFETSGSLVIRDPAKHAAHRRLISATYSMSNIKRMEPLLDKHILHFLEKLDSEYAQNAKPMDFSTWAAYLSYDTVTDLGFRNPLGFVDSASDVGGLIYQFRLGMLLFATSGYLYPLFRWLTTTWLKKWLIIRPEQALGFGVIMKRANEVLEERKRALTEGRIAKAVKGDASYDFLQAFMDTRTPEGEYLDNKTIRAEVFVILGAGADGFSSLSSAFIAEVLSRPAVYGRVMAEIKAAAIAGEFSQPVPLFTEITKNLPFFLACMQEIFRLHPTGATQLPREITPNDPELVLSGHKVPVGIEVTCNPWIINRDYNIYGDGAEVFNPDRWLGDPEKIKFYEKHSLTWGHGARFLMYFEVSICEETPETPKLESEIYGPVLGWKNVWLDLHKRRSWEQQ.

Residues 14-34 (VFTFCNIILALASLVVAQCVY) form a helical membrane-spanning segment. Residue Asn-308 is glycosylated (N-linked (GlcNAc...) asparagine). Heme is bound at residue Cys-477.

Belongs to the cytochrome P450 family. It depends on heme as a cofactor.

It is found in the membrane. It catalyses the reaction quiannulatene + 3 reduced [NADPH--hemoprotein reductase] + 3 O2 = quiannulatate + 3 oxidized [NADPH--hemoprotein reductase] + 4 H2O + 4 H(+). The protein operates within secondary metabolite biosynthesis; terpenoid biosynthesis. Its function is as follows. Cytochrome P450 monooxygenase; part of the gene cluster that mediates the biosynthesis of the pentacyclic sesterterpene quiannulatic acid. The first step of the pathway is performed by the sesterterpene synthase (QS) that possesses both prenyl transferase and terpene cyclase activity, converting isopentenyl diphosphate and dimethylallyl diphosphate into geranylfarnesyl diphosphate (GFPP) and further converting GFPP into quiannulatene via an unprecedented cyclization mode which involves three rounds of hydride shifts and two successive C-C bond migrations to construct the 5-6-5-5-5 fused ring. The cytochrome P450 monooxygenase Qnn-P450 then oxidizes quiannulatene at C-19 in 3 successive reactions to afford quiannulatic acid. In Emericella variicolor (Aspergillus stellatus), this protein is Quiannulatic acid synthase.